Here is a 975-residue protein sequence, read N- to C-terminus: Importin-11 (975 aa).

M1 carries the post-translational modification N-acetylmethionine. The Importin N-terminal domain occupies 28–100; sequence AEEQLKQWET…RAGLITNFNE (73 aa). HEAT repeat units follow at residues 123–160, 283–317, 318–356, 422–459, 473–509, 511–548, 555–593, 600–636, 640–677, 683–720, 731–773, 819–849, 850–887, and 957–974; these read RQWP…TLAS, QHPI…ERFI, VQCM…KMAF, QTLT…AVGL, WFKT…VKFK, DLRP…DFEF, PYLE…RVNV, GCLV…GLGA, NLYP…TLEN, PELL…SSTE, QSFY…ILPC, QEMD…KLSA, LALL…EDPE, and METV…FLQG. S343 carries the phosphoserine modification.

Belongs to the importin beta family. As to quaternary structure, interacts with UBE2E3 and RPL12.

The protein localises to the cytoplasm. It localises to the nucleus. Functions in nuclear protein import as nuclear transport receptor. Serves as receptor for nuclear localization signals (NLS) in cargo substrates. Is thought to mediate docking of the importin/substrate complex to the nuclear pore complex (NPC) through binding to nucleoporin and the complex is subsequently translocated through the pore by an energy requiring, Ran-dependent mechanism. At the nucleoplasmic side of the NPC, Ran binds to the importin, the importin/substrate complex dissociates and importin is re-exported from the nucleus to the cytoplasm where GTP hydrolysis releases Ran. The directionality of nuclear import is thought to be conferred by an asymmetric distribution of the GTP- and GDP-bound forms of Ran between the cytoplasm and nucleus. Mediates the nuclear import of RPL12, and of UBE2E3. This is Importin-11 (Ipo11) from Mus musculus (Mouse).